A 569-amino-acid chain; its full sequence is Potassium-transporting ATPase potassium-binding subunit (569 aa).

Helical transmembrane passes span 3–23 (LMEYTQLALFLGLLALMSPVL), 68–88 (AASLCAFSAAGFLMTFGVLML), 136–156 (VGLAYHNFVSAAAGLAVAVAV), 179–199 (VLYVLLPISLVLAVVLVGQGV), 259–279 (LQMLAIFIIPSSLVFTLGEAV), 284–304 (HAWTVWFVMACLFMVGTLSLY), 384–404 (GLYGMVLFILLTVFLAGLMVG), 422–442 (AMLALIIAATPPLLFSAVAAV), 490–510 (LALAMLIGRFGVMLPMLGVAG), and 534–554 (LLLTLVIVIVGALTYLPALAL).

The protein belongs to the KdpA family. The system is composed of three essential subunits: KdpA, KdpB and KdpC.

The protein resides in the cell inner membrane. Its function is as follows. Part of the high-affinity ATP-driven potassium transport (or Kdp) system, which catalyzes the hydrolysis of ATP coupled with the electrogenic transport of potassium into the cytoplasm. This subunit binds the periplasmic potassium ions and delivers the ions to the membrane domain of KdpB through an intramembrane tunnel. The polypeptide is Potassium-transporting ATPase potassium-binding subunit (Nitratidesulfovibrio vulgaris (strain DP4) (Desulfovibrio vulgaris)).